Reading from the N-terminus, the 382-residue chain is Toluene efflux pump periplasmic linker protein TtgD (382 aa).

Residues 1-23 form the signal peptide; it reads MRLERALRARQLIPLAAIWLLVG. A lipid anchor (N-palmitoyl cysteine) is attached at Cys-24. Residue Cys-24 is the site of S-diacylglycerol cysteine attachment. A coiled-coil region spans residues 100–136; the sequence is YEALLARAEASLLTAQNLARRYERLLDTNAISQQQYD.

This sequence belongs to the membrane fusion protein (MFP) (TC 8.A.1) family.

It localises to the cell inner membrane. Functionally, the periplasmic linker protein component of an inducible organic solvent efflux pump. Involved in export of toluene and styrene but not of m-xylene, propylbenzene or ethylbenzene. Is not involved in antibiotic or AMP efflux. The polypeptide is Toluene efflux pump periplasmic linker protein TtgD (ttgD) (Pseudomonas putida (strain DOT-T1E)).